The chain runs to 195 residues: Ciliary neurotrophic factor (195 aa).

Belongs to the CNTF family. As to expression, nervous system.

It localises to the cytoplasm. Functionally, CNTF is a survival factor for various neuronal cell types. Seems to prevent the degeneration of motor axons after axotomy. The protein is Ciliary neurotrophic factor (CNTF) of Gallus gallus (Chicken).